The following is a 143-amino-acid chain: Ribosome maturation factor RimP (143 aa).

It belongs to the RimP family.

It localises to the cytoplasm. Its function is as follows. Required for maturation of 30S ribosomal subunits. The protein is Ribosome maturation factor RimP of Borrelia turicatae (strain 91E135).